A 197-amino-acid polypeptide reads, in one-letter code: RNA-binding protein Rsf1 (197 aa).

The region spanning 7 to 80 is the RRM domain; sequence TRVYVGNLTD…SQLRVEISKG (74 aa). The interval 74-197 is disordered; sequence RVEISKGRPR…SRSPVGNHRF (124 aa). Residues 89–102 show a composition bias toward basic and acidic residues; that stretch reads GPMDRGGRRGDFGR. Threonine 106 carries the phosphothreonine modification. Composition is skewed to low complexity over residues 117–144 and 166–176; these read QRGSSGSSSRHTERGYSSGRSGASSYNG and RYSSGSSASYG. Phosphoserine occurs at positions 168, 171, 174, 188, and 190.

It belongs to the splicing factor SR family. In terms of processing, extensively phosphorylated on serine residues in the RS domain.

The protein localises to the nucleus. Functionally, may control important aspects of development. The sequence is that of RNA-binding protein Rsf1 (Rsf1) from Drosophila melanogaster (Fruit fly).